A 375-amino-acid polypeptide reads, in one-letter code: DNA replication and repair protein RecF (375 aa).

Gly-30–Thr-37 is a binding site for ATP.

Belongs to the RecF family.

Its subcellular location is the cytoplasm. The RecF protein is involved in DNA metabolism; it is required for DNA replication and normal SOS inducibility. RecF binds preferentially to single-stranded, linear DNA. It also seems to bind ATP. This chain is DNA replication and repair protein RecF, found in Halothermothrix orenii (strain H 168 / OCM 544 / DSM 9562).